The following is a 483-amino-acid chain: Glutamyl-tRNA(Gln) amidotransferase subunit A (483 aa).

Catalysis depends on charge relay system residues Lys76 and Ser151. Ser175 functions as the Acyl-ester intermediate in the catalytic mechanism.

The protein belongs to the amidase family. GatA subfamily. As to quaternary structure, heterotrimer of A, B and C subunits.

It carries out the reaction L-glutamyl-tRNA(Gln) + L-glutamine + ATP + H2O = L-glutaminyl-tRNA(Gln) + L-glutamate + ADP + phosphate + H(+). Allows the formation of correctly charged Gln-tRNA(Gln) through the transamidation of misacylated Glu-tRNA(Gln) in organisms which lack glutaminyl-tRNA synthetase. The reaction takes place in the presence of glutamine and ATP through an activated gamma-phospho-Glu-tRNA(Gln). In Pseudomonas putida (strain ATCC 700007 / DSM 6899 / JCM 31910 / BCRC 17059 / LMG 24140 / F1), this protein is Glutamyl-tRNA(Gln) amidotransferase subunit A.